We begin with the raw amino-acid sequence, 87 residues long: Small ribosomal subunit protein eS21 (87 aa).

The protein belongs to the eukaryotic ribosomal protein eS21 family. In terms of assembly, component of the small ribosomal subunit (SSU). Mature N.crassa ribosomes consist of a small (40S) and a large (60S) subunit. The 40S small subunit contains 1 molecule of ribosomal RNA (18S rRNA) and at least 32 different proteins. The large 60S subunit contains 3 rRNA molecules (26S, 5.8S and 5S rRNA) and at least 42 different proteins.

It is found in the cytoplasm. Its function is as follows. Component of the ribosome, a large ribonucleoprotein complex responsible for the synthesis of proteins in the cell. The small ribosomal subunit (SSU) binds messenger RNAs (mRNAs) and translates the encoded message by selecting cognate aminoacyl-transfer RNA (tRNA) molecules. The large subunit (LSU) contains the ribosomal catalytic site termed the peptidyl transferase center (PTC), which catalyzes the formation of peptide bonds, thereby polymerizing the amino acids delivered by tRNAs into a polypeptide chain. The nascent polypeptides leave the ribosome through a tunnel in the LSU and interact with protein factors that function in enzymatic processing, targeting, and the membrane insertion of nascent chains at the exit of the ribosomal tunnel. This chain is Small ribosomal subunit protein eS21 (crp-7), found in Neurospora crassa (strain ATCC 24698 / 74-OR23-1A / CBS 708.71 / DSM 1257 / FGSC 987).